A 199-amino-acid chain; its full sequence is CASP-like protein 4C1 (199 aa).

Topologically, residues 1-35 are cytoplasmic; the sequence is MESGSVANDSGPLNSTPDVHLYGKTAAMKQRRSNT. Residues 36-56 traverse the membrane as a helical segment; it reads MLFVFRLLTFSFSLAAVLVMG. At 57 to 80 the chain is on the extracellular side; the sequence is TNKQKIRSAPQYLEVAWHDFDPFR. A helical membrane pass occupies residues 81–101; it reads YVFAVNAIICVYSFVETWLAV. At 102–124 the chain is on the cytoplasmic side; sequence YTLSRGTLLLPETFQVWFDYGHD. Residues 125-145 form a helical membrane-spanning segment; it reads QGFACLLFSANSVGIAMAQLL. Residues 146-169 lie on the Extracellular side of the membrane; the sequence is QSGSTLIQGQYYCSDAGAYCTQAR. The chain crosses the membrane as a helical span at residues 170-190; that stretch reads VSIAMGFGAFLFLALSSFLTG. The Cytoplasmic portion of the chain corresponds to 191–199; that stretch reads LRVARWYLP.

This sequence belongs to the Casparian strip membrane proteins (CASP) family. As to quaternary structure, homodimer and heterodimers.

It is found in the cell membrane. The chain is CASP-like protein 4C1 from Physcomitrium patens (Spreading-leaved earth moss).